Consider the following 829-residue polypeptide: High affinity cAMP-specific and IBMX-insensitive 3',5'-cyclic phosphodiesterase 8A (829 aa).

Residues 16–46 (EDAPSPAAPPLSSGGPRLPQGQKTAALPRTR) are disordered. Serine 20 bears the Phosphoserine mark. A PAS domain is found at 213 to 283 (ACNSVFTALE…DTINSCIRIG (71 aa)). Residues 287-329 (QGIYYAKKKNGDNIQQNVKIIPVIGQGGKIRHYVSIIRVCNGN) enclose the PAC domain. Residues 341–360 (SDTHTDNQTGKHKDRRKGSL) are disordered. Serine 359 carries the post-translational modification Phosphoserine; by PKA. Serine 386 and serine 457 each carry phosphoserine. An involved in RAF1-binding region spans residues 454-461 (RRLSGNEY). Tyrosine 461 is modified (phosphotyrosine). In terms of domain architecture, PDEase spans 480–820 (SLDDVPPRIA…KYWKGLDEMK (341 aa)). The Proton donor role is filled by histidine 556. Histidine 560, histidine 596, aspartate 597, and aspartate 726 together coordinate a divalent metal cation.

It belongs to the cyclic nucleotide phosphodiesterase family. PDE8 subfamily. As to quaternary structure, interacts with RAF1. The interaction promotes RAF1 activity. The cofactor is a divalent metal cation. In terms of processing, phosphorylated at Ser-359 by PKA under elevated cAMP conditions, this enhances catalytic activity. As to expression, expressed in most tissues except thymus and peripheral blood leukocytes. Highest levels in testis, ovary, small intestine and colon.

The catalysed reaction is 3',5'-cyclic AMP + H2O = AMP + H(+). It functions in the pathway purine metabolism; 3',5'-cyclic AMP degradation; AMP from 3',5'-cyclic AMP: step 1/1. Inhibited by dipyridimole. Insensitive to selective PDE inhibitors including rolipram and zaprinast as well as to the non-selective inhibitor, IBMX. Unaffected by cGMP. Its function is as follows. Hydrolyzes the second messenger cAMP, which is a key regulator of many important physiological processes. May be involved in maintaining basal levels of the cyclic nucleotide and/or in the cAMP regulation of germ cell development. Binding to RAF1 reduces RAF1 'Ser-259' inhibitory-phosphorylation and stimulates RAF1-dependent EGF-activated ERK-signaling. Protects against cell death induced by hydrogen peroxide and staurosporine. The protein is High affinity cAMP-specific and IBMX-insensitive 3',5'-cyclic phosphodiesterase 8A (PDE8A) of Homo sapiens (Human).